The chain runs to 539 residues: Chaperonin GroEL (539 aa).

Residues 29–32 (TLGP), 86–90 (DGTTT), Gly-413, 476–478 (NAA), and Asp-492 contribute to the ATP site.

This sequence belongs to the chaperonin (HSP60) family. Forms a cylinder of 14 subunits composed of two heptameric rings stacked back-to-back. Interacts with the co-chaperonin GroES.

The protein localises to the cytoplasm. The catalysed reaction is ATP + H2O + a folded polypeptide = ADP + phosphate + an unfolded polypeptide.. Functionally, together with its co-chaperonin GroES, plays an essential role in assisting protein folding. The GroEL-GroES system forms a nano-cage that allows encapsulation of the non-native substrate proteins and provides a physical environment optimized to promote and accelerate protein folding. This is Chaperonin GroEL from Macrococcus caseolyticus (strain JCSC5402) (Macrococcoides caseolyticum).